Here is a 227-residue protein sequence, read N- to C-terminus: UPF0758 protein llmg_1515 (227 aa).

Positions 103 to 225 constitute an MPN domain; that stretch reads QVLSSKEYGM…YYSFRERDSN (123 aa). Positions 174, 176, and 187 each coordinate Zn(2+). A JAMM motif motif is present at residues 174 to 187; the sequence is HNHPSGNLQPSQAD.

This sequence belongs to the UPF0758 family.

The sequence is that of UPF0758 protein llmg_1515 from Lactococcus lactis subsp. cremoris (strain MG1363).